Reading from the N-terminus, the 551-residue chain is HTH-type transcriptional regulator SgrR (551 aa).

Residues 1 to 116 (MPSARLQQQF…LVSHLGRSFR (116 aa)) enclose the HTH marR-type domain. Positions 26-49 (LNELAALLSCSRRHMRTLLNTMQD) form a DNA-binding region, H-T-H motif. Residues 163-492 (ELEADIAHHW…IDWQADAARW (330 aa)) form a solute-binding region.

Activates the small RNA gene sgrS under glucose-phosphate stress conditions as well as yfdZ. Represses its own transcription under both stress and non-stress conditions. Might act as a sensor of the intracellular accumulation of phosphoglucose by binding these molecules in its C-terminal solute-binding domain. This Escherichia coli O6:K15:H31 (strain 536 / UPEC) protein is HTH-type transcriptional regulator SgrR.